A 40-amino-acid polypeptide reads, in one-letter code: Photosystem II reaction center protein J (40 aa).

A helical transmembrane segment spans residues 8–28 (IPLWLIGTVTGIIVIGLLGIF).

This sequence belongs to the PsbJ family. In terms of assembly, PSII is composed of 1 copy each of membrane proteins PsbA, PsbB, PsbC, PsbD, PsbE, PsbF, PsbH, PsbI, PsbJ, PsbK, PsbL, PsbM, PsbT, PsbX, PsbY, PsbZ, Psb30/Ycf12, at least 3 peripheral proteins of the oxygen-evolving complex and a large number of cofactors. It forms dimeric complexes.

The protein resides in the plastid. It is found in the chloroplast thylakoid membrane. In terms of biological role, one of the components of the core complex of photosystem II (PSII). PSII is a light-driven water:plastoquinone oxidoreductase that uses light energy to abstract electrons from H(2)O, generating O(2) and a proton gradient subsequently used for ATP formation. It consists of a core antenna complex that captures photons, and an electron transfer chain that converts photonic excitation into a charge separation. The chain is Photosystem II reaction center protein J from Pinus koraiensis (Korean pine).